A 235-amino-acid chain; its full sequence is MSSFQFEQIGVIRSPYKEKFAVPRQPGLVKSANGELHLIAPYNQADAVRGLEAFSHLWILFVFHQTMEGGWRPTVRPPRLGGNARMGVFATRSTFRPNPIGMSLVELKEVVCHKDSVILKLGSLDLVDGTPVVDIKPYLPFAESLPDASASYAQSAPAAEMAVSFTAEVEKQLLTLEKRYPQLTLFIREVLAQDPRPAYRKGEETGKTYAVWLHDFNVRWRVTDAGFEVFALEPR.

Residues 6–147 (FEQIGVIRSP…YLPFAESLPD (142 aa)) enclose the TsaA-like domain. S-adenosyl-L-methionine is bound by residues 23-25 (PRQ), 64-65 (HQ), Arg-92, and 127-130 (VDGT).

The protein belongs to the tRNA methyltransferase O family. In terms of assembly, homodimer.

It carries out the reaction N(6)-L-threonylcarbamoyladenosine(37) in tRNA + S-adenosyl-L-methionine = N(6)-methyl,N(6)-L-threonylcarbamoyladenosine(37) in tRNA + S-adenosyl-L-homocysteine + H(+). Its function is as follows. S-adenosyl-L-methionine-dependent methyltransferase responsible for the addition of the methyl group in the formation of N6-methyl-N6-threonylcarbamoyladenosine at position 37 (m(6)t(6)A37) of the tRNA anticodon loop of tRNA(Thr)(GGU) that read codons starting with adenosine. The methyl group of m(6)t(6)A37 appears to slightly improve the efficiency of the tRNA decoding ability. This Escherichia coli (strain K12) protein is tRNA (adenine(37)-N6)-methyltransferase.